We begin with the raw amino-acid sequence, 514 residues long: Double-stranded RNA-binding protein 6 (514 aa).

DRBM domains lie at 1–70 (MYKN…ALAR) and 87–155 (VYKN…SLRQ). 2 disordered regions span residues 195–268 (NNPH…SRFP) and 455–496 (EASQ…KDDH). 3 stretches are compositionally biased toward polar residues: residues 216-225 (FPQSSHSSYS), 249-263 (AASQ…SPNP), and 473-484 (SPDSLPKTQLKT).

Its function is as follows. Binds double-stranded RNA. This Oryza sativa subsp. japonica (Rice) protein is Double-stranded RNA-binding protein 6 (DRB6).